Here is a 249-residue protein sequence, read N- to C-terminus: 1-(5-phosphoribosyl)-5-[(5-phosphoribosylamino)methylideneamino] imidazole-4-carboxamide isomerase (249 aa).

Asp-8 serves as the catalytic Proton acceptor. Catalysis depends on Asp-131, which acts as the Proton donor.

The protein belongs to the HisA/HisF family.

It is found in the cytoplasm. The catalysed reaction is 1-(5-phospho-beta-D-ribosyl)-5-[(5-phospho-beta-D-ribosylamino)methylideneamino]imidazole-4-carboxamide = 5-[(5-phospho-1-deoxy-D-ribulos-1-ylimino)methylamino]-1-(5-phospho-beta-D-ribosyl)imidazole-4-carboxamide. It participates in amino-acid biosynthesis; L-histidine biosynthesis; L-histidine from 5-phospho-alpha-D-ribose 1-diphosphate: step 4/9. This chain is 1-(5-phosphoribosyl)-5-[(5-phosphoribosylamino)methylideneamino] imidazole-4-carboxamide isomerase, found in Leptothrix cholodnii (strain ATCC 51168 / LMG 8142 / SP-6) (Leptothrix discophora (strain SP-6)).